Here is a 215-residue protein sequence, read N- to C-terminus: 3-isopropylmalate dehydratase small subunit (215 aa).

The protein belongs to the LeuD family. LeuD type 1 subfamily. Heterodimer of LeuC and LeuD.

It carries out the reaction (2R,3S)-3-isopropylmalate = (2S)-2-isopropylmalate. It participates in amino-acid biosynthesis; L-leucine biosynthesis; L-leucine from 3-methyl-2-oxobutanoate: step 2/4. Catalyzes the isomerization between 2-isopropylmalate and 3-isopropylmalate, via the formation of 2-isopropylmaleate. The protein is 3-isopropylmalate dehydratase small subunit of Xylella fastidiosa (strain M12).